A 470-amino-acid polypeptide reads, in one-letter code: 3-isopropylmalate dehydratase large subunit (470 aa).

[4Fe-4S] cluster-binding residues include C346, C406, and C409.

The protein belongs to the aconitase/IPM isomerase family. LeuC type 1 subfamily. As to quaternary structure, heterodimer of LeuC and LeuD. The cofactor is [4Fe-4S] cluster.

It catalyses the reaction (2R,3S)-3-isopropylmalate = (2S)-2-isopropylmalate. It functions in the pathway amino-acid biosynthesis; L-leucine biosynthesis; L-leucine from 3-methyl-2-oxobutanoate: step 2/4. Catalyzes the isomerization between 2-isopropylmalate and 3-isopropylmalate, via the formation of 2-isopropylmaleate. The polypeptide is 3-isopropylmalate dehydratase large subunit (Shouchella clausii (strain KSM-K16) (Alkalihalobacillus clausii)).